A 125-amino-acid chain; its full sequence is Ribosome-binding factor A (125 aa).

Belongs to the RbfA family. Monomer. Binds 30S ribosomal subunits, but not 50S ribosomal subunits or 70S ribosomes.

It localises to the cytoplasm. Its function is as follows. One of several proteins that assist in the late maturation steps of the functional core of the 30S ribosomal subunit. Associates with free 30S ribosomal subunits (but not with 30S subunits that are part of 70S ribosomes or polysomes). Required for efficient processing of 16S rRNA. May interact with the 5'-terminal helix region of 16S rRNA. This chain is Ribosome-binding factor A, found in Xylella fastidiosa (strain 9a5c).